A 212-amino-acid chain; its full sequence is Thymidylate kinase (212 aa).

Residue Gly11 to Thr18 participates in ATP binding.

Belongs to the thymidylate kinase family.

It carries out the reaction dTMP + ATP = dTDP + ADP. In terms of biological role, phosphorylation of dTMP to form dTDP in both de novo and salvage pathways of dTTP synthesis. The polypeptide is Thymidylate kinase (Streptococcus pneumoniae (strain Hungary19A-6)).